A 617-amino-acid chain; its full sequence is Glutamyl-tRNA(Gln) amidotransferase subunit E (617 aa).

It belongs to the GatB/GatE family. GatE subfamily. As to quaternary structure, heterodimer of GatD and GatE.

It carries out the reaction L-glutamyl-tRNA(Gln) + L-glutamine + ATP + H2O = L-glutaminyl-tRNA(Gln) + L-glutamate + ADP + phosphate + H(+). In terms of biological role, allows the formation of correctly charged Gln-tRNA(Gln) through the transamidation of misacylated Glu-tRNA(Gln) in organisms which lack glutaminyl-tRNA synthetase. The reaction takes place in the presence of glutamine and ATP through an activated gamma-phospho-Glu-tRNA(Gln). The GatDE system is specific for glutamate and does not act on aspartate. The sequence is that of Glutamyl-tRNA(Gln) amidotransferase subunit E from Natronomonas pharaonis (strain ATCC 35678 / DSM 2160 / CIP 103997 / JCM 8858 / NBRC 14720 / NCIMB 2260 / Gabara) (Halobacterium pharaonis).